The primary structure comprises 442 residues: Glutamyl-tRNA(Gln) amidotransferase subunit D (442 aa).

The disordered stretch occupies residues 63 to 84 (TQTDIGSSAGAGADTEADKTES). Residues 102–429 (PTVSLISTGG…PDPTNAMRKS (328 aa)) form the Asparaginase/glutaminase domain. Catalysis depends on residues T112, T188, D189, and K265.

Belongs to the asparaginase 1 family. GatD subfamily. In terms of assembly, heterodimer of GatD and GatE.

It catalyses the reaction L-glutamyl-tRNA(Gln) + L-glutamine + ATP + H2O = L-glutaminyl-tRNA(Gln) + L-glutamate + ADP + phosphate + H(+). Functionally, allows the formation of correctly charged Gln-tRNA(Gln) through the transamidation of misacylated Glu-tRNA(Gln) in organisms which lack glutaminyl-tRNA synthetase. The reaction takes place in the presence of glutamine and ATP through an activated gamma-phospho-Glu-tRNA(Gln). The GatDE system is specific for glutamate and does not act on aspartate. This is Glutamyl-tRNA(Gln) amidotransferase subunit D from Haloquadratum walsbyi (strain DSM 16790 / HBSQ001).